Reading from the N-terminus, the 625-residue chain is Procollagen galactosyltransferase 2 (625 aa).

An N-terminal signal peptide occupies residues 1–26; that stretch reads MAARLATVACALFLLSSALLRLGCRA. N-linked (GlcNAc...) asparagine glycans are attached at residues N96, N184, N381, and N579. A disordered region spans residues 597-625; the sequence is QGHIRSTAKNTEALPPPTSLDTVPSRDEL. The Prevents secretion from ER signature appears at 622 to 625; the sequence is RDEL.

Belongs to the glycosyltransferase 25 family.

The protein resides in the endoplasmic reticulum lumen. It carries out the reaction (5R)-5-hydroxy-L-lysyl-[collagen] + UDP-alpha-D-galactose = (5R)-5-O-(beta-D-galactosyl)-5-hydroxy-L-lysyl-[collagen] + UDP + H(+). Its function is as follows. Beta-galactosyltransferase that transfers beta-galactose to hydroxylysine residues of collagen. This Mus musculus (Mouse) protein is Procollagen galactosyltransferase 2 (Colgalt2).